Here is a 1387-residue protein sequence, read N- to C-terminus: DNA-directed RNA polymerase subunit beta (1387 aa).

This sequence belongs to the RNA polymerase beta chain family. As to quaternary structure, the RNAP catalytic core consists of 2 alpha, 1 beta, 1 beta' and 1 omega subunit. When a sigma factor is associated with the core the holoenzyme is formed, which can initiate transcription.

It carries out the reaction RNA(n) + a ribonucleoside 5'-triphosphate = RNA(n+1) + diphosphate. Its function is as follows. DNA-dependent RNA polymerase catalyzes the transcription of DNA into RNA using the four ribonucleoside triphosphates as substrates. The sequence is that of DNA-directed RNA polymerase subunit beta from Xanthomonas campestris pv. campestris (strain 8004).